The following is a 109-amino-acid chain: Tyrosine-protein phosphatase 6 (109 aa).

One can recognise a Tyrosine-protein phosphatase domain in the interval 1–109 (YNINVIVMVC…SEDETTPLCV (109 aa)). Asp76 serves as a coordination point for substrate.

Belongs to the protein-tyrosine phosphatase family.

The enzyme catalyses O-phospho-L-tyrosyl-[protein] + H2O = L-tyrosyl-[protein] + phosphate. In Styela plicata (Wrinkled sea squirt), this protein is Tyrosine-protein phosphatase 6 (STY-6).